The chain runs to 30 residues: Nattererin-2 (30 aa).

Expressed by the skin glands.

It localises to the secreted. Probably has antibacterial activity. This Physalaemus nattereri (Cuyaba dwarf frog) protein is Nattererin-2.